A 118-amino-acid chain; its full sequence is Large ribosomal subunit protein bL20 (118 aa).

This sequence belongs to the bacterial ribosomal protein bL20 family.

Binds directly to 23S ribosomal RNA and is necessary for the in vitro assembly process of the 50S ribosomal subunit. It is not involved in the protein synthesizing functions of that subunit. This Shewanella baltica (strain OS223) protein is Large ribosomal subunit protein bL20.